The chain runs to 136 residues: DUF35 domain-containing scaffold protein (136 aa).

Zn(2+) contacts are provided by Cys25, Cys38, and Cys41.

Belongs to the scaffold protein DUF35 family. In terms of assembly, interacts with acetoacetyl-CoA thiolase and HMG-CoA synthase (HMGCS) that catalyzes the first and second step in the mevalonate pathway, respectively.

In terms of biological role, functions as a scaffold to connect the acetoacetyl-CoA thiolase and HMG-CoA synthase (HMGCS) dimers in the channeling thiolase/HMGCS complex, which allows for efficient coupling of the endergonic thiolase reaction with the exergonic HMGCS reaction. This is DUF35 domain-containing scaffold protein from Pyrococcus furiosus (strain ATCC 43587 / DSM 3638 / JCM 8422 / Vc1).